The chain runs to 87 residues: UPF0367 protein Pro_0144 (87 aa).

The protein belongs to the UPF0367 family.

This is UPF0367 protein Pro_0144 from Prochlorococcus marinus (strain SARG / CCMP1375 / SS120).